Here is a 498-residue protein sequence, read N- to C-terminus: Glycerol kinase (498 aa).

An ADP-binding site is contributed by Thr12. Residues Thr12, Thr13, and Ser14 each coordinate ATP. Thr12 provides a ligand contact to sn-glycerol 3-phosphate. Arg16 contributes to the ADP binding site. Sn-glycerol 3-phosphate-binding residues include Arg82, Glu83, Tyr135, and Asp245. Glycerol contacts are provided by Arg82, Glu83, Tyr135, Asp245, and Gln246. Residues Thr267 and Gly310 each coordinate ADP. Positions 267, 310, 314, and 411 each coordinate ATP. 2 residues coordinate ADP: Gly411 and Asn415.

Belongs to the FGGY kinase family. As to quaternary structure, homotetramer and homodimer (in equilibrium).

It carries out the reaction glycerol + ATP = sn-glycerol 3-phosphate + ADP + H(+). The protein operates within polyol metabolism; glycerol degradation via glycerol kinase pathway; sn-glycerol 3-phosphate from glycerol: step 1/1. Its activity is regulated as follows. Activated by phosphorylation and inhibited by fructose 1,6-bisphosphate (FBP). Functionally, key enzyme in the regulation of glycerol uptake and metabolism. Catalyzes the phosphorylation of glycerol to yield sn-glycerol 3-phosphate. The sequence is that of Glycerol kinase from Clostridium botulinum (strain Alaska E43 / Type E3).